The chain runs to 534 residues: MNSLTNIEDLNCDNQHIPNGFRRWIFSTNHKDIGIMYIIFAIFAGVVGGLFSLLFRLELAMPGGTFLNHNFQLYNVLITVHAIIMVFFMIMPALFSGFGNYFVPLLIGAPDMAFPRLNNISFWLLIPAFLLLISSTFIDGGPGTGWTLYPPLSNLNGHTGAAVDVAIFSLHLTGLSSILGSINLIVTIFNMRTPGMGLFKMPLFVWSILVTAFLIILAMPVLSGAITMLLTDRNFGTTFFKPDGGGDPLLFQHLFWFFGHPEVYIVILPGFGIVSQVISTFSRKPIFGYQGMVGAMVIIGFVGFIVWAHHMFTVGLSYNALIYFTAGTMIIAVPTGIKIFSWIATMWGGSITFPTPMLFAIGFIILFTIGGVTGIILSNSALDRVLHDTYYVVAHFHYTMSLGALFTAFAGFYYWFGKISGKQYPEILGKIHFWITFIGVNLTFFPQHFLGLAGMPRRIPDYPEAFAGWNMVSSIGAGISIFAAFYFVFIVFYTLKYGKNCTANPWGDGADTLEWKLNSPPPFHTFETPPHIVE.

Transmembrane regions (helical) follow at residues 35–55 (IMYI…SLLF), 76–96 (VLIT…ALFS), 97–117 (GFGN…FPRL), 120–140 (ISFW…FIDG), 165–185 (VAIF…INLI), 202–222 (PLFV…MPVL), 254–274 (LFWF…FGIV), and 286–306 (IFGY…GFIV). His-81 serves as a coordination point for Fe(II)-heme a. Cu cation contacts are provided by His-260 and Tyr-264. The segment at residues 260 to 264 (HPEVY) is a cross-link (1'-histidyl-3'-tyrosine (His-Tyr)). Cu cation-binding residues include His-309 and His-310. Transmembrane regions (helical) follow at residues 320 to 340 (ALIY…IKIF) and 357 to 377 (MLFA…GIIL). His-395 lines the heme a3 pocket. Helical transmembrane passes span 396–416 (FHYT…YYWF), 433–453 (FWIT…LGLA), and 475–495 (IGAG…FYTL). His-397 is a Fe(II)-heme a binding site.

Belongs to the heme-copper respiratory oxidase family.

Its subcellular location is the cell membrane. It catalyses the reaction 4 Fe(II)-[cytochrome c] + O2 + 8 H(+)(in) = 4 Fe(III)-[cytochrome c] + 2 H2O + 4 H(+)(out). It functions in the pathway energy metabolism; oxidative phosphorylation. Cytochrome c oxidase is the component of the respiratory chain that catalyzes the reduction of oxygen to water. Subunits 1-3 form the functional core of the enzyme complex. CO I is the catalytic subunit of the enzyme. Electrons originating in cytochrome c are transferred via the copper A center of subunit 2 and heme A of subunit 1 to the bimetallic center formed by heme A3 and copper B. The polypeptide is Probable cytochrome c oxidase subunit 1 (ctaD) (Rickettsia prowazekii (strain Madrid E)).